The primary structure comprises 237 residues: MTDLQTQMKIAVAQEAIGEIKDGMILGLGSGSTAALMIKSLGEKLKEGSLKEIIGVPTSFQGEVLASQLGIPLRAFSAVSKIDLAIDGADEVDPNFQLIKGGGACHVQEKLVASIADRFVVVVDSTKIVEKLNLEFKLPVEVLPAAWKLVQKELNDLGAKSDLRMAEKKAGPIVTDQGNLVLDVQFADGISDPQNLEKQINNFPGVLENGLFVNLTDEVLVGEIKNGVSSVNRLKKA.

Residues 30–33, 87–90, and 100–103 each bind substrate; these read SGST, DGAD, and KGGG. Catalysis depends on Glu-109, which acts as the Proton acceptor. Lys-127 is a binding site for substrate.

This sequence belongs to the ribose 5-phosphate isomerase family. As to quaternary structure, homodimer.

The catalysed reaction is aldehydo-D-ribose 5-phosphate = D-ribulose 5-phosphate. It participates in carbohydrate degradation; pentose phosphate pathway; D-ribose 5-phosphate from D-ribulose 5-phosphate (non-oxidative stage): step 1/1. Its function is as follows. Catalyzes the reversible conversion of ribose-5-phosphate to ribulose 5-phosphate. The protein is Ribose-5-phosphate isomerase A of Prochlorococcus marinus (strain SARG / CCMP1375 / SS120).